Here is a 262-residue protein sequence, read N- to C-terminus: Hydroxyethylthiazole kinase (262 aa).

Substrate is bound at residue methionine 43. Positions 118 and 164 each coordinate ATP. Alanine 191 provides a ligand contact to substrate.

This sequence belongs to the Thz kinase family. Mg(2+) serves as cofactor.

It carries out the reaction 5-(2-hydroxyethyl)-4-methylthiazole + ATP = 4-methyl-5-(2-phosphooxyethyl)-thiazole + ADP + H(+). It participates in cofactor biosynthesis; thiamine diphosphate biosynthesis; 4-methyl-5-(2-phosphoethyl)-thiazole from 5-(2-hydroxyethyl)-4-methylthiazole: step 1/1. Catalyzes the phosphorylation of the hydroxyl group of 4-methyl-5-beta-hydroxyethylthiazole (THZ). The polypeptide is Hydroxyethylthiazole kinase (Cereibacter sphaeroides (strain ATCC 17029 / ATH 2.4.9) (Rhodobacter sphaeroides)).